The sequence spans 73 residues: uncharacterized protein (73 aa).

The signal sequence occupies residues 1–23; that stretch reads MLHLIKMVSKIVLLITLVFIVSA.

This is an uncharacterized protein from Acheta domesticus (House cricket).